An 810-amino-acid chain; its full sequence is Interleukin-4 receptor subunit alpha (810 aa).

The N-terminal stretch at 1–25 (MGRLCTKFLTSVGCLILLLVTGSGS) is a signal peptide. The Extracellular segment spans residues 26–233 (IKVLGEPTCF…NHFQLPLIQR (208 aa)). C34 and C44 are oxidised to a cystine. An N-linked (GlcNAc...) asparagine glycan is attached at N72. C75 and C87 are oxidised to a cystine. Residues 126–224 (APDNLTLHTN…EWSPSITWYN (99 aa)) enclose the Fibronectin type-III domain. N-linked (GlcNAc...) asparagine glycosylation is found at N129, N135, and N163. S165 bears the Phosphoserine mark. Positions 213–217 (WSEWS) match the WSXWS motif motif. Residues 234–257 (LPLGVTISCLCIPLFCLFCYFSIT) traverse the membrane as a helical segment. Residues 258 to 810 (KIKKIWWDQI…PVGALGIAVS (553 aa)) are Cytoplasmic-facing. The short motif at 263–271 (WWDQIPTPA) is the Box 1 motif element. Residues 441-557 (GSGQASVSWA…ESWEQILHMS (117 aa)) are required for IRS1 activation and IL4-induced cell growth. The segment at 460–482 (ATCQVTEQPSHPGPLSGSPAQSA) is disordered. Residue Y500 is modified to Phosphotyrosine. The segment at 510-546 (APNPGELAPEQQQADHLEEEEPPSPADPHSSGPPMQP) is disordered. Residues 557–653 (SVLQHGAAAG…SSVPLFTFGL (97 aa)) are required for IL4-induced gene expression. Phosphotyrosine occurs at positions 575, 603, and 631. The disordered stretch occupies residues 586–672 (AAQDPGVPGV…NSDPPKSPPE (87 aa)). Low complexity predominate over residues 635–647 (QNPVPNQSPSSVP). The ITIM motif motif lies at 707–712 (IVYSSL). Positions 766–810 (PPEANLMSAPKTPSNLSGEGKGPGHSPVPSQTTEVPVGALGIAVS) are disordered.

The protein belongs to the type I cytokine receptor family. Type 4 subfamily. The functional IL4 receptor is formed by initial binding of IL4 to IL4R. Subsequent recruitment to the complex of the common gamma chain, in immune cells, creates a type I receptor and, in non-immune cells, of IL13RA1 forms a type II receptor. IL4R can also interact with the IL13/IL13RA1 complex to form a similar type II receptor. Interacts with the SH2-containing phosphatases, PTPN6/SHIP1, PTPN11/SHIP2 and INPP5D/SHIP. Interacts with JAK3. Interacts with PIK3C3. Interacts with JAK1 through a Box 1-containing region; inhibited by SOCS5. Interacts with SOCS5; inhibits IL4 signaling. Interacts with CLM1. Interacts with IL13RA2. Post-translationally, on IL4 binding, phosphorylated on C-terminal tyrosine residues. In terms of processing, soluble IL4R can also be produced by proteolytic cleavage at the cell surface (shedding). In terms of tissue distribution, expressed in both Th1 and Th2 cells.

The protein localises to the cell membrane. The protein resides in the secreted. In terms of biological role, receptor for both interleukin 4 and interleukin 13. Couples to the JAK1/2/3-STAT6 pathway. The IL4 response is involved in promoting Th2 differentiation. The IL4/IL13 responses are involved in regulating IgE production and, chemokine and mucus production at sites of allergic inflammation. In certain cell types, can signal through activation of insulin receptor substrates, IRS1/IRS2. This chain is Interleukin-4 receptor subunit alpha (Il4r), found in Mus musculus (Mouse).